The following is a 123-amino-acid chain: Fluoride-specific ion channel FluC (123 aa).

4 helical membrane-spanning segments follow: residues 7–27, 39–59, 68–88, and 100–120; these read VAIA…SGIL, LVNS…FWGI, FFGT…YETF, and ALNI…GFIL. 2 residues coordinate Na(+): Gly75 and Ser78.

This sequence belongs to the fluoride channel Fluc/FEX (TC 1.A.43) family.

The protein localises to the cell membrane. It catalyses the reaction fluoride(in) = fluoride(out). With respect to regulation, na(+) is not transported, but it plays an essential structural role and its presence is essential for fluoride channel function. In terms of biological role, fluoride-specific ion channel. Important for reducing fluoride concentration in the cell, thus reducing its toxicity. The polypeptide is Fluoride-specific ion channel FluC (Thermococcus onnurineus (strain NA1)).